Consider the following 384-residue polypeptide: Flap endonuclease 1 (384 aa).

An N-domain region spans residues 1 to 105 (MGIKKLTDLI…GELAKRQARR (105 aa)). D34 serves as a coordination point for Mg(2+). R71 lines the DNA pocket. D87, E159, E161, D180, and D182 together coordinate Mg(2+). The I-domain stretch occupies residues 123-254 (EVQKFAKRVI…KRAIELIQKH (132 aa)). Position 159 (E159) interacts with DNA. The DNA site is built by G232 and D234. D234 contributes to the Mg(2+) binding site. Residues 338–346 (VQSRMDSFI) form an interaction with PCNA region. Residues 349 to 384 (IKKPEDPNDKKKKVTKTPSKPSAKTSKKSSSTFKRK) form a disordered region. Residues 364–384 (KTPSKPSAKTSKKSSSTFKRK) show a composition bias toward low complexity.

This sequence belongs to the XPG/RAD2 endonuclease family. FEN1 subfamily. Interacts with PCNA. Three molecules of repg bind to one PCNA trimer with each molecule binding to one PCNA monomer. PCNA stimulates the nuclease activity without altering cleavage specificity. It depends on Mg(2+) as a cofactor. Post-translationally, phosphorylated. Phosphorylation upon DNA damage induces relocalization to the nuclear plasma.

Its subcellular location is the nucleus. The protein resides in the nucleolus. The protein localises to the nucleoplasm. It is found in the mitochondrion. Structure-specific nuclease with 5'-flap endonuclease and 5'-3' exonuclease activities involved in DNA replication and repair. During DNA replication, cleaves the 5'-overhanging flap structure that is generated by displacement synthesis when DNA polymerase encounters the 5'-end of a downstream Okazaki fragment. It enters the flap from the 5'-end and then tracks to cleave the flap base, leaving a nick for ligation. Also involved in the long patch base excision repair (LP-BER) pathway, by cleaving within the apurinic/apyrimidinic (AP) site-terminated flap. Acts as a genome stabilization factor that prevents flaps from equilibrating into structures that lead to duplications and deletions. Also possesses 5'-3' exonuclease activity on nicked or gapped double-stranded DNA, and exhibits RNase H activity. Also involved in replication and repair of rDNA and in repairing mitochondrial DNA. The chain is Flap endonuclease 1 from Dictyostelium discoideum (Social amoeba).